The sequence spans 987 residues: uncharacterized protein (987 aa).

The next 2 helical transmembrane spans lie at Phe12 to Gly32 and Val958 to Leu978.

To M.jannaschii MJ1393 and A.fulgidus AF2028.

It localises to the cell membrane. This is an uncharacterized protein from Methanocaldococcus jannaschii (strain ATCC 43067 / DSM 2661 / JAL-1 / JCM 10045 / NBRC 100440) (Methanococcus jannaschii).